The sequence spans 71 residues: ATP synthase F(0) complex subunit e, mitochondrial (71 aa).

Position 34 is an N6-acetyllysine (Lys-34). The residue at position 68 (Ser-68) is a Phosphoserine.

This sequence belongs to the ATPase e subunit family. In terms of assembly, component of the ATP synthase complex composed at least of ATP5F1A/subunit alpha, ATP5F1B/subunit beta, ATP5MC1/subunit c (homooctomer), MT-ATP6/subunit a, MT-ATP8/subunit 8, ATP5ME/subunit e, ATP5MF/subunit f, ATP5MG/subunit g, ATP5MK/subunit k, ATP5MJ/subunit j, ATP5F1C/subunit gamma, ATP5F1D/subunit delta, ATP5F1E/subunit epsilon, ATP5PF/subunit F6, ATP5PB/subunit b, ATP5PD/subunit d, ATP5PO/subunit OSCP. ATP synthase complex consists of a soluble F(1) head domain (subunits alpha(3) and beta(3)) - the catalytic core - and a membrane F(0) domain - the membrane proton channel (subunits c, a, 8, e, f, g, k and j). These two domains are linked by a central stalk (subunits gamma, delta, and epsilon) rotating inside the F1 region and a stationary peripheral stalk (subunits F6, b, d, and OSCP).

The protein localises to the mitochondrion. The protein resides in the mitochondrion inner membrane. Its function is as follows. Subunit e, of the mitochondrial membrane ATP synthase complex (F(1)F(0) ATP synthase or Complex V) that produces ATP from ADP in the presence of a proton gradient across the membrane which is generated by electron transport complexes of the respiratory chain. ATP synthase complex consist of a soluble F(1) head domain - the catalytic core - and a membrane F(1) domain - the membrane proton channel. These two domains are linked by a central stalk rotating inside the F(1) region and a stationary peripheral stalk. During catalysis, ATP synthesis in the catalytic domain of F(1) is coupled via a rotary mechanism of the central stalk subunits to proton translocation. In vivo, can only synthesize ATP although its ATP hydrolase activity can be activated artificially in vitro. Part of the complex F(0) domain. The sequence is that of ATP synthase F(0) complex subunit e, mitochondrial from Rattus norvegicus (Rat).